The following is a 111-amino-acid chain: UPF0145 protein Bphy_3680 (111 aa).

The protein belongs to the UPF0145 family.

The protein is UPF0145 protein Bphy_3680 of Paraburkholderia phymatum (strain DSM 17167 / CIP 108236 / LMG 21445 / STM815) (Burkholderia phymatum).